Consider the following 121-residue polypeptide: Flagellar protein FliT (121 aa).

The required for homodimerization stretch occupies residues 1-50 (MNNAPHLYFAWQQLVEKSQLMLRLATEEQWDELIASEMAYVNAVQEIAHL). The fliD binding stretch occupies residues 60-98 (MQEQLRPMLLLILDNESKVKQLLQIRMDELAKLVGQSSV).

The protein belongs to the FliT family. Homodimer. Interacts with FliD and FlhC.

The protein localises to the cytoplasm. It localises to the cytosol. In terms of biological role, dual-function protein that regulates the transcription of class 2 flagellar operons and that also acts as an export chaperone for the filament-capping protein FliD. As a transcriptional regulator, acts as an anti-FlhDC factor; it directly binds FlhC, thus inhibiting the binding of the FlhC/FlhD complex to class 2 promoters, resulting in decreased expression of class 2 flagellar operons. As a chaperone, effects FliD transition to the membrane by preventing its premature polymerization, and by directing it to the export apparatus. This is Flagellar protein FliT from Escherichia coli O6:K15:H31 (strain 536 / UPEC).